Reading from the N-terminus, the 108-residue chain is uncharacterized protein (108 aa).

This is an uncharacterized protein from Microplitis demolitor bracovirus (isolate Webb) (MdBV).